Here is a 698-residue protein sequence, read N- to C-terminus: G1/S-specific cyclin CCN1 (698 aa).

Over residues 1-11 (MTSLQQQQQQQ) the composition is skewed to low complexity. Disordered regions lie at residues 1–21 (MTSL…PHHI), 277–326 (QKKQ…DDED), 469–577 (DEDE…GSIL), 599–619 (SNSS…EKRY), and 659–698 (NNTN…QYHQ). Residues 277–302 (QKKQKKAFSSNSSRTTTASYTHQNQS) are compositionally biased toward polar residues. Acidic residues-rich tracts occupy residues 310 to 326 (DEDI…DDED) and 469 to 480 (DEDENVSTDDEA). Composition is skewed to polar residues over residues 493–520 (DGNN…NHPQ) and 528–567 (PSAT…SSFA). The segment covering 659 to 669 (NNTNSSSPLMN) has biased composition (polar residues). Residues 670–690 (QQQQYYHQQQHQQQVTQSSLY) show a composition bias toward low complexity.

This sequence belongs to the cyclin family.

Essential for the control of the cell cycle at the G1/S (start) transition. Interacts with the CDC2 protein kinase to form MPF. The protein is G1/S-specific cyclin CCN1 (CCN1) of Candida albicans (strain WO-1) (Yeast).